The sequence spans 105 residues: Co-chaperonin GroES (105 aa).

This sequence belongs to the GroES chaperonin family. In terms of assembly, heptamer of 7 subunits arranged in a ring. Interacts with the chaperonin GroEL.

The protein localises to the cytoplasm. Together with the chaperonin GroEL, plays an essential role in assisting protein folding. The GroEL-GroES system forms a nano-cage that allows encapsulation of the non-native substrate proteins and provides a physical environment optimized to promote and accelerate protein folding. GroES binds to the apical surface of the GroEL ring, thereby capping the opening of the GroEL channel. The polypeptide is Co-chaperonin GroES (Parvibaculum lavamentivorans (strain DS-1 / DSM 13023 / NCIMB 13966)).